We begin with the raw amino-acid sequence, 305 residues long: Putative lipid kinase SAS0691 (305 aa).

Residues 3–139 enclose the DAGKc domain; sequence NKYTHGVLFY…YDVIKINNQY (137 aa). Residues S44, 74–80, and T101 contribute to the ATP site; that span reads GDGTVNE. The Mg(2+) site is built by S220, D223, and E225. The active-site Proton acceptor is the E281.

It belongs to the diacylglycerol/lipid kinase family. Requires Mg(2+) as cofactor.

May catalyze the ATP-dependent phosphorylation of lipids other than diacylglycerol (DAG). The sequence is that of Putative lipid kinase SAS0691 from Staphylococcus aureus (strain MSSA476).